The primary structure comprises 339 residues: Phenylalanine--tRNA ligase alpha subunit (339 aa).

Glu254 contacts Mg(2+).

Belongs to the class-II aminoacyl-tRNA synthetase family. Phe-tRNA synthetase alpha subunit type 1 subfamily. In terms of assembly, tetramer of two alpha and two beta subunits. Requires Mg(2+) as cofactor.

Its subcellular location is the cytoplasm. It carries out the reaction tRNA(Phe) + L-phenylalanine + ATP = L-phenylalanyl-tRNA(Phe) + AMP + diphosphate + H(+). The polypeptide is Phenylalanine--tRNA ligase alpha subunit (Clostridium perfringens (strain SM101 / Type A)).